A 179-amino-acid polypeptide reads, in one-letter code: Monothiol glutaredoxin-S12, chloroplastic (179 aa).

A chloroplast-targeting transit peptide spans 1-61 (MVAATVNLAN…WPPLRCSSVK (61 aa)). Ala-62 is subject to N-acetylalanine. A Glutaredoxin domain is found at 75–176 (EETVKTTVAE…AILAEANGKN (102 aa)). [2Fe-2S] cluster is bound at residue Cys-95.

This sequence belongs to the glutaredoxin family. CPYC subfamily.

It is found in the plastid. It localises to the chloroplast. Its function is as follows. May only reduce GSH-thiol disulfides, but not protein disulfides. The sequence is that of Monothiol glutaredoxin-S12, chloroplastic (GRXS12) from Arabidopsis thaliana (Mouse-ear cress).